The primary structure comprises 511 residues: 2,3-bisphosphoglycerate-independent phosphoglycerate mutase (511 aa).

2 residues coordinate Mn(2+): aspartate 14 and serine 64. Serine 64 functions as the Phosphoserine intermediate in the catalytic mechanism. Residues histidine 125, 155 to 156, arginine 187, arginine 193, 259 to 262, and lysine 333 each bind substrate; these read RD and RADR. 5 residues coordinate Mn(2+): aspartate 400, histidine 404, aspartate 441, histidine 442, and histidine 460.

Belongs to the BPG-independent phosphoglycerate mutase family. Monomer. Requires Mn(2+) as cofactor.

The catalysed reaction is (2R)-2-phosphoglycerate = (2R)-3-phosphoglycerate. The protein operates within carbohydrate degradation; glycolysis; pyruvate from D-glyceraldehyde 3-phosphate: step 3/5. Functionally, catalyzes the interconversion of 2-phosphoglycerate and 3-phosphoglycerate. The protein is 2,3-bisphosphoglycerate-independent phosphoglycerate mutase of Pseudoalteromonas atlantica (strain T6c / ATCC BAA-1087).